A 586-amino-acid polypeptide reads, in one-letter code: Old nuclease (586 aa).

The segment at 1–163 (MTVRLASVSI…VEDSTKCKNT (163 aa)) is ATPase domain N-terminus. 34–38 (NAGKS) provides a ligand contact to ATP. Residues 164 to 270 (TTIGKILSAI…SRFGHGTQRS (107 aa)) are dimerization domain. The tract at residues 271 to 390 (IQMALIQYLA…TLSNSSYLLF (120 aa)) is ATPase domain C-terminus. A toprim domain region spans residues 393 to 586 (EVLLVEGKTE…DEMEDFIKWI (194 aa)). Positions 398, 402, 453, 455, 541, and 543 each coordinate a divalent metal cation. Arg-570 acts as the Stabilizes transition state or protonates leaving group in catalysis.

Belongs to the class 1 OLD nuclease family. Mg(2+) is required as a cofactor.

The enzyme catalyses Exonucleolytic cleavage in the 5'- to 3'-direction to yield nucleoside 5'-phosphates.. Its function is as follows. An exonuclease that acts preferentially on linear dsDNA, processively degrading it from 5'-3', releasing 5'-phosphomononucleotides. Initiates on 5'-phosphate and 5'-hydroxyl ends. Also acts on linear ssDNA, nicked DNA and RNA. ATP enhances but is not necessary for exonuclease activity; has ATPase activity that is not stimulated by DNA. The old protein kills E.coli recB and recC mutants and interferes with phage lambda growth. Both the exonuclease and ATPase activities are required in vivo. Probably interferes with lambda phage by degrading its linear DNA. Isolated as a mutant able to lysogenize E.coli strain C cells normally not susceptible to lysis by phage P2. The sequence is that of Old nuclease from Enterobacteriaceae (Bacteriophage P2).